The sequence spans 312 residues: MAAQKINEGLEHLAKAEKYLKTGFLKWKPDYDSAASEYGKAAVAFKNAKQFEQAKDACLREAVAHENNRALFHAAKAYEQAGMMLKEMQKLPEAVQLIEKASMMYLENGTPDTAAMALERAGKLIENVDPEKAVQLYQQTANVFENEERLRQAVELLGKASRLLVRGRRFDEAALSIQKEKNIYKEIENYPTCYKKTIAQVLVHLHRNDYVAAERCVRESYSIPGFNGSEDCAALEQLLEGYDQQDQDQVSEVCNSPLFKYMDNDYAKLGLSLVVPGGGIKKKSPATPQAKPDGAAGMAAEEEEDEYSGGLC.

A disordered region spans residues 281–312; that stretch reads KKKSPATPQAKPDGAAGMAAEEEEDEYSGGLC. Position 284 is a phosphoserine (S284). Phosphothreonine is present on T287. Over residues 300 to 312 the composition is skewed to acidic residues; that stretch reads AEEEEDEYSGGLC. The residue at position 308 (S308) is a Phosphoserine.

This sequence belongs to the SNAP family. In terms of assembly, interacts with RAB11FIP5. Interacts with VTI1A. Abundantly expressed in the heart, liver and kidneys with lower expression in the brain, spleen, lung, muscle and testes.

The protein resides in the membrane. The protein localises to the golgi apparatus. Its function is as follows. Required for vesicular transport between the endoplasmic reticulum and the Golgi apparatus. The chain is Gamma-soluble NSF attachment protein from Mus musculus (Mouse).